Reading from the N-terminus, the 445-residue chain is Scarecrow-like protein 18 (445 aa).

Low complexity predominate over residues 1–21 (MLTSFKSSSSSSEDATATTTE). A disordered region spans residues 1–26 (MLTSFKSSSSSSEDATATTTENPPPL). In terms of domain architecture, GRAS spans 32 to 445 (SAATSASHHL…RPLFSVSSWK (414 aa)). Positions 39 to 127 (HHLRRLLFTA…STVFTSSVCK (89 aa)) are leucine repeat I (LRI). The interval 146–217 (YLWLNQLTPF…SPPPSLRITG (72 aa)) is VHIID. Residues 179 to 183 (LHILD) carry the VHIID motif. The tract at residues 227–259 (RTGDRLTRFADSLGLQFQFHTLVIVEEDLAGLL) is leucine repeat II (LRII). Residues 275–366 (IAVNCVHFLH…QRWFGKEILD (92 aa)) form a PFYRE region. An SAW region spans residues 369 to 445 (AAEETERKQR…RPLFSVSSWK (77 aa)).

It belongs to the GRAS family. As to expression, expressed in roots and flowers.

It is found in the nucleus. In terms of biological role, probable transcription factor required for axillary (lateral) shoot meristem formation during vegetative development. Seems to act upstream of REVOLUTA. The polypeptide is Scarecrow-like protein 18 (SCL18) (Arabidopsis thaliana (Mouse-ear cress)).